Here is a 308-residue protein sequence, read N- to C-terminus: Ribosomal RNA small subunit methyltransferase H (308 aa).

Residues Gly33 to His35, Asp52, Phe78, Asp99, and Gln106 contribute to the S-adenosyl-L-methionine site. A disordered region spans residues Glu289 to Leu308.

This sequence belongs to the methyltransferase superfamily. RsmH family.

It is found in the cytoplasm. It carries out the reaction cytidine(1402) in 16S rRNA + S-adenosyl-L-methionine = N(4)-methylcytidine(1402) in 16S rRNA + S-adenosyl-L-homocysteine + H(+). In terms of biological role, specifically methylates the N4 position of cytidine in position 1402 (C1402) of 16S rRNA. The sequence is that of Ribosomal RNA small subunit methyltransferase H from Thermoanaerobacter sp. (strain X514).